A 715-amino-acid polypeptide reads, in one-letter code: Scinderin (715 aa).

Residues 1–363 (MARELYHEEF…DGFGKVYVTE (363 aa)) are actin-severing. The stretch at 27–76 (LELVPVPQSAHGDFYVGDAYLVLHTAKTSRGFTYHLHFWLGKECSQDEST) is one Gelsolin-like 1 repeat. Tyr102 is modified (phosphotyrosine). Residues 112–119 (KGGLKYKA) and 138–146 (RLLHVKGRR) each bind a 1,2-diacyl-sn-glycero-3-phospho-(1D-myo-inositol-4,5-bisphosphate). Gelsolin-like repeat units lie at residues 148 to 188 (VRAT…YERL), 265 to 307 (VVAE…QERK), 398 to 451 (VEIW…DELT), and 523 to 564 (TRIV…EEEK). The segment at 364–715 (KVAQIKQIPF…WFLGWDSSKW (352 aa)) is ca(2+)-dependent actin binding. Residues Asn538, Asp539, and Glu562 each coordinate Ca(2+). Tyr599 is subject to Phosphotyrosine. One copy of the Gelsolin-like 6 repeat lies at 626-668 (FVIEEIPGEFTQDDLAEDDVMLLDAWEQIFIWIGKDANEVEKK). Residues Asp643, Asp644, and Glu666 each contribute to the Ca(2+) site.

It belongs to the villin/gelsolin family. Expressed in megakaryocytes.

The protein resides in the cytoplasm. Its subcellular location is the cytoskeleton. It localises to the cell projection. It is found in the podosome. In terms of biological role, ca(2+)-dependent actin filament-severing protein that has a regulatory function in exocytosis by affecting the organization of the microfilament network underneath the plasma membrane. Severing activity is inhibited by phosphatidylinositol 4,5-bis-phosphate (PIP2). In vitro, also has barbed end capping and nucleating activities in the presence of Ca(2+). Required for megakaryocyte differentiation, maturation, polyploidization and apoptosis with the release of platelet-like particles. Plays a role in osteoclastogenesis (OCG) and actin cytoskeletal organization in osteoclasts. Regulates chondrocyte proliferation and differentiation. Inhibits cell proliferation and tumorigenesis. Signaling is mediated by MAPK, p38 and JNK pathways. The polypeptide is Scinderin (Homo sapiens (Human)).